Reading from the N-terminus, the 313-residue chain is MTDLSFPGQAASPGEGAGQTPSGGSGHRFDTRRHWAASLSLGFRDRDGRTRMTRARHHGPLRVQRPFYPETGHVPDARYAEPCHVYLLHPPGGLVSGDELRIDIEAESGAHALLTTPAATKLYRADSHGVCWGQHTHLSVRPGALLEWLPQETLCFDGARGMQSTTLDVQGDGCCVGWEVLALGRPASQLPFVSGRVEQRFALTRDGRPLWRERQPLDPMHPRFHGYWGQGGSTVQATLWAVGLTAPQAAVEALRECLPASRHWAVTQRRDVLLLRYLGDERNAAWEICQQAWEVLRPWLSSRQASVPRIWMT.

Residues 1 to 30 (MTDLSFPGQAASPGEGAGQTPSGGSGHRFD) are disordered. Over residues 15-26 (EGAGQTPSGGSG) the composition is skewed to gly residues.

Belongs to the UreD family. UreD, UreF and UreG form a complex that acts as a GTP-hydrolysis-dependent molecular chaperone, activating the urease apoprotein by helping to assemble the nickel containing metallocenter of UreC. The UreE protein probably delivers the nickel.

The protein resides in the cytoplasm. Functionally, required for maturation of urease via the functional incorporation of the urease nickel metallocenter. This Chromohalobacter salexigens (strain ATCC BAA-138 / DSM 3043 / CIP 106854 / NCIMB 13768 / 1H11) protein is Urease accessory protein UreD.